A 463-amino-acid polypeptide reads, in one-letter code: tRNA (guanine(10)-N(2))-methyltransferase TRMT11 (463 aa).

A2 bears the N-acetylalanine mark.

The protein belongs to the class I-like SAM-binding methyltransferase superfamily. TRM11 methyltransferase family. As to quaternary structure, part of the heterodimeric TRMT11-TRM112 methyltransferase complex; this complex forms an active tRNA methyltransferase, where TRMT112 acts as an activator of the catalytic subunit TRMT11.

It localises to the cytoplasm. The enzyme catalyses guanosine(10) in tRNA + S-adenosyl-L-methionine = N(2)-methylguanosine(10) in tRNA + S-adenosyl-L-homocysteine + H(+). Catalytic subunit of the TRMT11-TRM112 methyltransferase complex, that specifically mediates the S-adenosyl-L-methionine-dependent N(2)-methylation of guanosine nucleotide at position 10 (m2G10) in tRNAs. This is one of the major tRNA (guanine-N(2))-methyltransferases. This is tRNA (guanine(10)-N(2))-methyltransferase TRMT11 from Rattus norvegicus (Rat).